We begin with the raw amino-acid sequence, 100 residues long: Small ribosomal subunit protein uS14 (100 aa).

It belongs to the universal ribosomal protein uS14 family. In terms of assembly, part of the 30S ribosomal subunit. Contacts proteins S3 and S10.

In terms of biological role, binds 16S rRNA, required for the assembly of 30S particles and may also be responsible for determining the conformation of the 16S rRNA at the A site. The polypeptide is Small ribosomal subunit protein uS14 (Synechococcus sp. (strain CC9902)).